The chain runs to 356 residues: Putative [LysW]-L-2-aminoadipate/[LysW]-L-glutamate phosphate reductase (356 aa).

Residue 11–14 (SGYT) coordinates NADP(+). Residue cysteine 157 is part of the active site. Asparagine 323 is a binding site for NADP(+).

It belongs to the NAGSA dehydrogenase family. Type 1 subfamily. LysY sub-subfamily.

It localises to the cytoplasm. The catalysed reaction is [amino-group carrier protein]-C-terminal-N-(1-carboxy-5-oxopentan-1-yl)-L-glutamine + phosphate + NADP(+) = [amino-group carrier protein]-C-terminal-N-(1-carboxy-5-phosphooxy-5-oxopentan-1-yl)-L-glutamine + NADPH + H(+). It catalyses the reaction [amino-group carrier protein]-C-terminal-gamma-(L-glutamyl-5-semialdehyde)-L-glutamate + phosphate + NADP(+) = [amino-group carrier protein]-C-terminal-gamma-(5-phospho-L-glutamyl)-L-glutamate + NADPH + H(+). The protein operates within amino-acid biosynthesis; L-lysine biosynthesis via AAA pathway; L-lysine from L-alpha-aminoadipate (Thermus route): step 3/5. Its pathway is amino-acid biosynthesis; L-arginine biosynthesis. Its function is as follows. Involved in both the arginine and lysine biosynthetic pathways. In Ignicoccus hospitalis (strain KIN4/I / DSM 18386 / JCM 14125), this protein is Putative [LysW]-L-2-aminoadipate/[LysW]-L-glutamate phosphate reductase.